The sequence spans 131 residues: Large ribosomal subunit protein bL12 (131 aa).

This sequence belongs to the bacterial ribosomal protein bL12 family. Homodimer. Part of the ribosomal stalk of the 50S ribosomal subunit. Forms a multimeric L10(L12)X complex, where L10 forms an elongated spine to which 2 to 4 L12 dimers bind in a sequential fashion. Binds GTP-bound translation factors.

In terms of biological role, forms part of the ribosomal stalk which helps the ribosome interact with GTP-bound translation factors. Is thus essential for accurate translation. This chain is Large ribosomal subunit protein bL12, found in Prochlorococcus marinus (strain NATL2A).